The primary structure comprises 93 residues: Small ribosomal subunit protein bS18 (93 aa).

Residues 1–11 (MAPSARNRKPG) show a composition bias toward basic residues. Residues 1–27 (MAPSARNRKPGARSMAKAAALRKPKKK) form a disordered region.

The protein belongs to the bacterial ribosomal protein bS18 family. As to quaternary structure, part of the 30S ribosomal subunit. Forms a tight heterodimer with protein bS6.

In terms of biological role, binds as a heterodimer with protein bS6 to the central domain of the 16S rRNA, where it helps stabilize the platform of the 30S subunit. This is Small ribosomal subunit protein bS18 from Salinispora tropica (strain ATCC BAA-916 / DSM 44818 / JCM 13857 / NBRC 105044 / CNB-440).